The chain runs to 286 residues: MREDLLRNSVEFLREKTVLDAPDVKKIEFLKSKGLTAEEIQEAFKLAKNPLFPSYPRFENTSNFVSRDWRDWFIMGVISTGFAWSAYSLVKKYIAPMFRAPSQNAYEADKNALDAKFLEAHKILENLDEQTRKLSERTEKQQDELDIALDDLEETLNTLKRTSENRDREIARISQDVYTMSTITLPQSLEQIKKSQEEALQNLSREISSLRCLQTDSKKDDTFATTSNSSIPVLENPLDTSEGFQTKKVGTASLPDWQISMHNEASKNIDFNDIDPAESYVAEDAY.

Positions T61–W69 match the SH3-binding motif. A coiled-coil region spans residues K122–Q214. The segment at K218–D239 is disordered.

Belongs to the peroxin-14 family. In terms of assembly, interacts with PEX13 (via SH3 domain); forming the PEX13-PEX14 docking complex. Interacts with PEX5 (via WxxxF/Y motifs).

The protein resides in the peroxisome membrane. Its function is as follows. Component of the PEX13-PEX14 docking complex, a translocon channel that specifically mediates the import of peroxisomal cargo proteins bound to PEX5 receptor. The PEX13-PEX14 docking complex forms a large import pore which can be opened to a diameter of about 9 nm. Mechanistically, PEX5 receptor along with cargo proteins associates with the PEX14 subunit of the PEX13-PEX14 docking complex in the cytosol, leading to the insertion of the receptor into the organelle membrane with the concomitant translocation of the cargo into the peroxisome matrix. This chain is Peroxisomal membrane protein pex14 (pex14), found in Schizosaccharomyces pombe (strain 972 / ATCC 24843) (Fission yeast).